A 296-amino-acid polypeptide reads, in one-letter code: Nucleotide-binding protein M6_Spy0559 (296 aa).

13–20 (GMSGAGKT) is a binding site for ATP. 63 to 66 (DMRS) provides a ligand contact to GTP.

It belongs to the RapZ-like family.

In terms of biological role, displays ATPase and GTPase activities. The sequence is that of Nucleotide-binding protein M6_Spy0559 from Streptococcus pyogenes serotype M6 (strain ATCC BAA-946 / MGAS10394).